A 963-amino-acid chain; its full sequence is IQ motif and SEC7 domain-containing protein 1 (963 aa).

The tract at residues 21-88 (SGVEGEAPSS…TRRPKLQHST (68 aa)) is disordered. Residues 29 to 38 (SSETGTSLDS) are compositionally biased toward polar residues. Residues Ser-89, Ser-105, and Ser-107 each carry the phosphoserine modification. Positions 134–163 (TRHAARTIQTAFRQYQMNKNFERLRSSMSE) constitute an IQ domain. A phosphoserine mark is found at Ser-180, Ser-249, and Ser-253. Disordered stretches follow at residues 312–332 (LSPP…ESDL) and 349–513 (KEDK…RNSW). Basic and acidic residues-rich tracts occupy residues 366 to 376 (ERQEQRLRVEH) and 430 to 446 (LPRE…RPLD). A compositionally biased stretch (low complexity) spans 471 to 489 (DSINSTSNSNDTINCSSES). Ser-512 and Ser-515 each carry phosphoserine. The 194-residue stretch at 517-710 (AFSNDVIRKR…MGIYERIRKR (194 aa)) folds into the SEC7 domain. The PH domain occupies 774 to 866 (HQREIFLFND…LRESIAEVQE (93 aa)). The stretch at 848 to 879 (QDRKKFTDDLRESIAEVQEMEKHRIESELEKQ) forms a coiled coil. Ser-892 carries the post-translational modification Phosphoserine. A Phosphotyrosine modification is found at Tyr-911. The disordered stretch occupies residues 922–947 (LSSSLRDLSEAGKRGRRSSAGSLESN). Ser-924 and Ser-925 each carry phosphoserine.

This sequence belongs to the BRAG family. Interacts with ARF1 and ARF6. Interacts with GRIA2; the interaction is required for ARF6 activation. As to expression, expressed in brain, ovary, heart, lung, liver, kidney and leukocytes. Moderate expression was also detected in lung, skeletal muscle, placenta, small intestine, pancreas, spleen and testis.

It localises to the cytoplasm. The protein localises to the nucleus. The protein resides in the postsynaptic density. It is found in the cytoplasmic vesicle. Its subcellular location is the secretory vesicle. It localises to the synaptic vesicle. In terms of biological role, guanine nucleotide exchange factor for ARF1 and ARF6. Guanine nucleotide exchange factor activity is enhanced by lipid binding. Accelerates GTP binding by ARFs of all three classes. Guanine nucleotide exchange protein for ARF6, mediating internalization of beta-1 integrin. Involved in neuronal development. In neurons, plays a role in the control of vesicle formation by endocytoc cargo. Upon long term depression, interacts with GRIA2 and mediates the activation of ARF6 to internalize synaptic AMPAR receptors. In Homo sapiens (Human), this protein is IQ motif and SEC7 domain-containing protein 1.